Reading from the N-terminus, the 190-residue chain is Lipid A 1-phosphatase (190 aa).

A run of 5 helical transmembrane segments spans residues 22–42 (LLAL…PKVP), 60–80 (FIPT…VGLF), 117–137 (GNFN…AFLM), 145–162 (YFWL…RIYL), and 164–184 (MHTI…VSLF).

This sequence belongs to the lipid A LpxE 1-phosphatase family. The cofactor is Does not require divalent cations..

The protein resides in the cell inner membrane. Its pathway is bacterial outer membrane biogenesis; LPS lipid A biosynthesis. Its function is as follows. Removes the 1-phosphate group from tetra- and probably hexaacylated lipid A species, has no requirement for the Kdo moiety of lipid A. Has no 4'-phosphatase activity. Has no activity on phospholipids (phosphatidylglycerol, phosphatidylethanolamine or cardiolipin). This enzyme has to act before EptA can attach phosphoethanolamine to the 1-position of lipid A. Absence of the 1-phosphate group renders the bacteria partially resistant to host-derived cationic antimicrobial peptides (CAMP), allowing it to camouflage itself from the host innate immune response, and plays a role in the long-term colonization of the host's stomach. The chain is Lipid A 1-phosphatase from Helicobacter pylori (strain ATCC 700392 / 26695) (Campylobacter pylori).